Consider the following 404-residue polypeptide: Plasma serine protease inhibitor (404 aa).

The signal sequence occupies residues Met-1–Leu-19. The propeptide at Arg-20–Lys-24 is removed in mature form. 2 O-linked (GalNAc...) threonine glycosylation sites follow: Thr-35 and Thr-36. Asn-245, Asn-258, and Asn-334 each carry an N-linked (GlcNAc...) asparagine glycan.

This sequence belongs to the serpin family. Forms protease inhibiting heterodimers in extracellular body fluids with serine proteases such as activated protein C/coagulation factor V/F5, acrosin/ACR, chymotrypsinogen B/CTRB1, prothrombin/F2, factor Xa/F10, factor XI/F11, kallikrein/KLKB1, tissue kallikrein, trypsin/PRSS1, prostate specific antigen/KLK3, tissue plasminogen activator/PLAT and urinary plasminogen activator/PLAU. Forms membrane-anchored serine proteases inhibiting heterodimers with TMPRSS7 and TMPRSS11E. Interacts with SEMG2. In terms of processing, N-glycosylated; glycans consist of a mixture of sialylated bi- (including sialyl-Lewis X epitopes), tri- and tetra-antennary complex-type chains; affects the maximal heparin- and thrombomodulin-enhanced rates of thrombin inhibition. O-glycosylated; further modified with 2 sialic acid residues. Proteolytically cleaved at the N-terminus; inhibits slightly the heparin- and thrombomodulin-enhanced rates of thrombin inhibition. N- and O-glycosylated. Post-translationally, proteolytically cleaved. Inhibition of proteases is accompanied by formation of a stable enzyme-inhibitor complex and by degradation of the serpin to lower molecular weight derivatives. Expressed strongly in the liver, and moderately in the kidney and testis, but not in other tissues tested.

Its subcellular location is the secreted. The protein localises to the extracellular space. Its activity is regulated as follows. Its inhibitory activity is greatly enhanced in the presence of glycosaminoglycans, heparin, thrombomodulin and phospholipids vesicles. Heparin-dependent serine protease inhibitor acting in body fluids and secretions. Inactivates serine proteases by binding irreversibly to their serine activation site. Involved in the regulation of intravascular and extravascular proteolytic activities. Plays hemostatic roles in the blood plasma. Acts as a procoagulant and pro-inflammatory factor by inhibiting the anticoagulant activated protein C factor as well as the generation of activated protein C factor by the thrombin/thrombomodulin complex. Acts as an anticoagulant factor by inhibiting blood coagulation factors like prothrombin, factor XI, factor Xa, plasma kallikrein and fibrinolytic enzymes such as tissue- and urinary-type plasminogen activators. In seminal plasma, inactivates several serine proteases implicated in the reproductive system. Inhibits the serpin acrosin; indirectly protects component of the male genital tract from being degraded by excessive released acrosin. Inhibits tissue- and urinary-type plasminogen activator, prostate-specific antigen and kallikrein activities; has a control on the sperm motility and fertilization. Inhibits the activated protein C-catalyzed degradation of SEMG1 and SEMG2; regulates the degradation of semenogelin during the process of transfer of spermatozoa from the male reproductive tract into the female tract. In urine, inhibits urinary-type plasminogen activator and kallikrein activities. Inactivates membrane-anchored serine proteases activities such as MPRSS7 and TMPRSS11E. Inhibits urinary-type plasminogen activator-dependent tumor cell invasion and metastasis. May also play a non-inhibitory role in seminal plasma and urine as a hydrophobic hormone carrier by its binding to retinoic acid. The protein is Plasma serine protease inhibitor (SERPINA5) of Bos taurus (Bovine).